The following is a 702-amino-acid chain: Elongation factor G (702 aa).

The tr-type G domain occupies 8–196; that stretch reads ERYRNIGISA…MKAIIWDEAS (189 aa). GTP-binding positions include 17–24, 88–92, and 142–145; these read AHIDAGKT, DTPGH, and NKMD.

Belongs to the TRAFAC class translation factor GTPase superfamily. Classic translation factor GTPase family. EF-G/EF-2 subfamily.

It is found in the cytoplasm. Its function is as follows. Catalyzes the GTP-dependent ribosomal translocation step during translation elongation. During this step, the ribosome changes from the pre-translocational (PRE) to the post-translocational (POST) state as the newly formed A-site-bound peptidyl-tRNA and P-site-bound deacylated tRNA move to the P and E sites, respectively. Catalyzes the coordinated movement of the two tRNA molecules, the mRNA and conformational changes in the ribosome. In Thiomonas delicata (Thiomonas cuprina), this protein is Elongation factor G (fusA).